Consider the following 333-residue polypeptide: Phosphate acyltransferase (333 aa).

The protein belongs to the PlsX family. As to quaternary structure, homodimer. Probably interacts with PlsY.

The protein resides in the cytoplasm. It carries out the reaction a fatty acyl-[ACP] + phosphate = an acyl phosphate + holo-[ACP]. It functions in the pathway lipid metabolism; phospholipid metabolism. Functionally, catalyzes the reversible formation of acyl-phosphate (acyl-PO(4)) from acyl-[acyl-carrier-protein] (acyl-ACP). This enzyme utilizes acyl-ACP as fatty acyl donor, but not acyl-CoA. The protein is Phosphate acyltransferase of Lactobacillus johnsonii (strain CNCM I-12250 / La1 / NCC 533).